Here is a 61-residue protein sequence, read N- to C-terminus: Large ribosomal subunit protein uL29 (61 aa).

It belongs to the universal ribosomal protein uL29 family.

The polypeptide is Large ribosomal subunit protein uL29 (Nitratidesulfovibrio vulgaris (strain DSM 19637 / Miyazaki F) (Desulfovibrio vulgaris)).